The chain runs to 151 residues: 16.9 kDa class I heat shock protein 1 (151 aa).

Positions 37–151 constitute a sHSP domain; the sequence is ETAAFANARV…PEVKAIEISG (115 aa).

Belongs to the small heat shock protein (HSP20) family. In terms of assembly, may form oligomeric structures.

It is found in the cytoplasm. The chain is 16.9 kDa class I heat shock protein 1 (hsp16.9A) from Triticum aestivum (Wheat).